Reading from the N-terminus, the 400-residue chain is Glycine betaine/proline betaine transport system ATP-binding protein ProV (400 aa).

The ABC transporter domain occupies Leu29–Phe265. Gly61 to Ser68 lines the ATP pocket. CBS domains lie at Arg282 to Ala341 and Leu343 to Gly400.

This sequence belongs to the ABC transporter superfamily. In terms of assembly, the complex is composed of two ATP-binding proteins (ProV), two transmembrane proteins (ProW) and a solute-binding protein (ProX).

It localises to the cell inner membrane. Its function is as follows. Part of the ProU ABC transporter complex involved in glycine betaine and proline betaine uptake. Probably responsible for energy coupling to the transport system. This chain is Glycine betaine/proline betaine transport system ATP-binding protein ProV, found in Escherichia coli (strain K12).